We begin with the raw amino-acid sequence, 426 residues long: 3-phosphoshikimate 1-carboxyvinyltransferase (426 aa).

Positions 23, 24, and 28 each coordinate 3-phosphoshikimate. Phosphoenolpyruvate is bound at residue lysine 23. Residues glycine 96 and arginine 124 each contribute to the phosphoenolpyruvate site. 3-phosphoshikimate-binding residues include threonine 170, serine 171, glutamine 172, serine 198, aspartate 314, and lysine 341. Position 172 (glutamine 172) interacts with phosphoenolpyruvate. Aspartate 314 (proton acceptor) is an active-site residue. Arginine 345, arginine 386, and lysine 411 together coordinate phosphoenolpyruvate.

The protein belongs to the EPSP synthase family. In terms of assembly, monomer.

The protein localises to the cytoplasm. It carries out the reaction 3-phosphoshikimate + phosphoenolpyruvate = 5-O-(1-carboxyvinyl)-3-phosphoshikimate + phosphate. It participates in metabolic intermediate biosynthesis; chorismate biosynthesis; chorismate from D-erythrose 4-phosphate and phosphoenolpyruvate: step 6/7. In terms of biological role, catalyzes the transfer of the enolpyruvyl moiety of phosphoenolpyruvate (PEP) to the 5-hydroxyl of shikimate-3-phosphate (S3P) to produce enolpyruvyl shikimate-3-phosphate and inorganic phosphate. The chain is 3-phosphoshikimate 1-carboxyvinyltransferase from Nostoc punctiforme (strain ATCC 29133 / PCC 73102).